The sequence spans 344 residues: Ubiquitin-associated domain-containing protein 2 (344 aa).

The first 34 residues, 1–34 (MFTSTGSNGLYKAPLSKSLLLVPSAISILLTLLF), serve as a signal peptide directing secretion. Residues 35–91 (QHYQKFFAYNLQAIKEDFQIWRLVCGRVICLDLKDTFCSSLLIYNFRIFERRYGSRK) are Extracellular-facing. A helical transmembrane segment spans residues 92 to 111 (FSSFLLGAWTLSALFDLLLV). The Cytoplasmic portion of the chain corresponds to 112–123 (EAAQYVFGITIN). A helical transmembrane segment spans residues 124-142 (SLPSGFLGPVFALFVPFYC). Over 143–162 (SIPRVQVTQVLGYFSITNKT) the chain is Extracellular. N-linked (GlcNAc...) asparagine glycosylation occurs at N160. A helical transmembrane segment spans residues 163–183 (LVYILGLQLLTSGSYIWILAL). At 184-344 (SGLISGICYN…NVATNFLLQH (161 aa)) the chain is on the cytoplasmic side. Positions 284–307 (RHNENYQDHHPSDQDTPPPTEVSE) are disordered. The span at 286–296 (NENYQDHHPSD) shows a compositional bias: basic and acidic residues. The UBA domain occupies 304-344 (EVSEEQVARLMEMGFSRGDALEALRASNNDLNVATNFLLQH).

It is found in the endoplasmic reticulum membrane. In terms of biological role, restricts trafficking of FAF2 from the endoplasmic reticulum to lipid droplets. May negatively regulate the canonical Wnt signaling pathway in the lymphocytes. The sequence is that of Ubiquitin-associated domain-containing protein 2 (UBAC2) from Gallus gallus (Chicken).